The following is a 307-amino-acid chain: D-alanine--D-alanine ligase (307 aa).

The region spanning K101–E301 is the ATP-grasp domain. P127–T182 contributes to the ATP binding site. Positions 251, 268, and 270 each coordinate Mg(2+).

This sequence belongs to the D-alanine--D-alanine ligase family. It depends on Mg(2+) as a cofactor. Mn(2+) is required as a cofactor.

It is found in the cytoplasm. It carries out the reaction 2 D-alanine + ATP = D-alanyl-D-alanine + ADP + phosphate + H(+). The protein operates within cell wall biogenesis; peptidoglycan biosynthesis. Cell wall formation. The protein is D-alanine--D-alanine ligase of Methylorubrum extorquens (strain PA1) (Methylobacterium extorquens).